Consider the following 285-residue polypeptide: NAD kinase (285 aa).

Asp66 serves as the catalytic Proton acceptor. NAD(+) is bound by residues 66–67, 137–138, Arg148, Arg165, Asp167, and 178–183; these read DG, ND, and TAYSLS.

Belongs to the NAD kinase family. It depends on a divalent metal cation as a cofactor.

Its subcellular location is the cytoplasm. It catalyses the reaction NAD(+) + ATP = ADP + NADP(+) + H(+). Functionally, involved in the regulation of the intracellular balance of NAD and NADP, and is a key enzyme in the biosynthesis of NADP. Catalyzes specifically the phosphorylation on 2'-hydroxyl of the adenosine moiety of NAD to yield NADP. The sequence is that of NAD kinase from Prosthecochloris aestuarii (strain DSM 271 / SK 413).